We begin with the raw amino-acid sequence, 98 residues long: NADH-ubiquinone oxidoreductase chain 4L (98 aa).

3 helical membrane-spanning segments follow: residues 1–21 (MPSIYVNIFLAFIFALLGMLI), 29–49 (SLLCLEGMMLSLFILITLTAL), and 61–81 (IVLLVFAACEAAIGLALLVMV).

It belongs to the complex I subunit 4L family. As to quaternary structure, core subunit of respiratory chain NADH dehydrogenase (Complex I) which is composed of 45 different subunits.

The protein localises to the mitochondrion inner membrane. The catalysed reaction is a ubiquinone + NADH + 5 H(+)(in) = a ubiquinol + NAD(+) + 4 H(+)(out). Its function is as follows. Core subunit of the mitochondrial membrane respiratory chain NADH dehydrogenase (Complex I) which catalyzes electron transfer from NADH through the respiratory chain, using ubiquinone as an electron acceptor. Part of the enzyme membrane arm which is embedded in the lipid bilayer and involved in proton translocation. The chain is NADH-ubiquinone oxidoreductase chain 4L (MT-ND4L) from Lepus europaeus (European hare).